Here is a 154-residue protein sequence, read N- to C-terminus: Terephthalate 1,2-dioxygenase, terminal oxygenase component subunit beta 2 (154 aa).

Belongs to the bacterial ring-hydroxylating dioxygenase beta subunit family. Heterotetramer composed of 2 alpha (TphA2I and TphA2II) and 2 beta (TphA3I and TphA3II) subunits. Part of a multicomponent enzyme system composed of a reductase (TphA1I or TphA1II) and a two-subunit oxygenase component (TphA2I or TphA2II and TphA3I or TphA3II). The cofactor is Fe cation.

It catalyses the reaction terephthalate + NADH + O2 + H(+) = (3S,4R)-3,4-dihydroxycyclohexa-1,5-diene-1,4-dicarboxylate + NAD(+). Inhibited by EDTA. Functionally, component of the terephthalate 1,2-dioxygenase multicomponent enzyme system which catalyzes the dioxygenation of terephthalate (TER/TPA) to 1,2-dihydroxy-3,5-cyclohexadiene-1,4-dicarboxylic acid (DCD). It can also use 2,5-dicarboxypyridine (PDC) and 1,4-napthalenedicarboxylic acid (NDC) as substrates, and preferentially uses NADPH which is the physiological electron donor. The polypeptide is Terephthalate 1,2-dioxygenase, terminal oxygenase component subunit beta 2 (tphA3II) (Comamonas sp).